Here is a 424-residue protein sequence, read N- to C-terminus: Cyclin-dependent kinase D-1 (424 aa).

The 281-residue stretch at 19–299 (YLKREVLGEG…AQQALEHRYF (281 aa)) folds into the Protein kinase domain. Residues 25–33 (LGEGTYGVV) and K48 contribute to the ATP site. T29 is modified (phosphothreonine). At Y30 the chain carries Phosphotyrosine. Residue D141 is the Proton acceptor of the active site. Position 168 is a phosphoserine (S168). At T174 the chain carries Phosphothreonine. Disordered stretches follow at residues 303 to 337 (PAPT…PVVL) and 359 to 424 (ADRT…GYTE). Residues 359–374 (ADRTEEHPSGARHMDD) show a composition bias toward basic and acidic residues.

Belongs to the protein kinase superfamily. CMGC Ser/Thr protein kinase family. CDC2/CDKX subfamily.

Its subcellular location is the nucleus. It catalyses the reaction L-seryl-[protein] + ATP = O-phospho-L-seryl-[protein] + ADP + H(+). The catalysed reaction is L-threonyl-[protein] + ATP = O-phospho-L-threonyl-[protein] + ADP + H(+). It carries out the reaction [DNA-directed RNA polymerase] + ATP = phospho-[DNA-directed RNA polymerase] + ADP + H(+). In Oryza sativa subsp. indica (Rice), this protein is Cyclin-dependent kinase D-1 (CDKD-1).